The sequence spans 80 residues: UPF0291 protein LACR_1198 (80 aa).

This sequence belongs to the UPF0291 family.

It localises to the cytoplasm. The sequence is that of UPF0291 protein LACR_1198 from Lactococcus lactis subsp. cremoris (strain SK11).